Reading from the N-terminus, the 499-residue chain is Protein dml1 (499 aa).

Belongs to the misato family.

It localises to the mitochondrion. Its function is as follows. Involved in the partitioning of the mitochondrial organelle and mitochondrial DNA (mtDNA) inheritance. The protein is Protein dml1 (dml1) of Aspergillus clavatus (strain ATCC 1007 / CBS 513.65 / DSM 816 / NCTC 3887 / NRRL 1 / QM 1276 / 107).